A 212-amino-acid chain; its full sequence is Vesicle transport protein SFT2C (212 aa).

At 1 to 78 (MADLHRQLQD…TRGQRLVAGG (78 aa)) the chain is on the cytoplasmic side. A helical membrane pass occupies residues 79–99 (LCLLLAALCFGLAALYAPVLL). Topologically, residues 100 to 104 (LRARK) are lumenal. A helical transmembrane segment spans residues 105-125 (FALLWSLGSVLAWASAALLRG). The Cytoplasmic segment spans residues 126-142 (GPACGRLLRGEETPSRS). Residues 143-165 (TLGYAAALGATLYAALVLRSTVL) form a helical membrane-spanning segment. Residues 166 to 174 (TALGACAQV) lie on the Lumenal side of the membrane. Residues 175-197 (AALLYALIGLLPWGGVTALRLAL) traverse the membrane as a helical segment. At 198-212 (GRLNRGTGLANALPV) the chain is on the cytoplasmic side.

Belongs to the SFT2 family.

The protein localises to the membrane. In terms of biological role, may be involved in fusion of retrograde transport vesicles derived from an endocytic compartment with the Golgi complex. This chain is Vesicle transport protein SFT2C, found in Mus musculus (Mouse).